The chain runs to 151 residues: MSKIEQIAKDLVMPVLEKNNFELVDVEYKKEGSHWYLRVYIDKEGGITLDDCQLVSEYLSDRLDEVDPIEHSYILEVSSPGLDRPLKKPRDFERNIGKEIEISLYAPIDKRKKFEGELIEFTGDKIIILYNGERKEFDMKNVSLVKPVIKF.

It belongs to the RimP family.

The protein localises to the cytoplasm. Functionally, required for maturation of 30S ribosomal subunits. The polypeptide is Ribosome maturation factor RimP (Thermoanaerobacter pseudethanolicus (strain ATCC 33223 / 39E) (Clostridium thermohydrosulfuricum)).